A 241-amino-acid polypeptide reads, in one-letter code: Sugar fermentation stimulation protein homolog (241 aa).

It belongs to the SfsA family.

The polypeptide is Sugar fermentation stimulation protein homolog (Hahella chejuensis (strain KCTC 2396)).